An 80-amino-acid polypeptide reads, in one-letter code: Probable Rubredoxin-1 (80 aa).

Positions 19–72 constitute a Rubredoxin-like domain; the sequence is YRKYKCKVCGWVYDPLKGDPSQNIPPKTPFEELPDTWICPVCRGKVGKESFEPL. C24, C27, C57, and C60 together coordinate Fe cation.

The protein belongs to the rubredoxin family. It depends on Fe(3+) as a cofactor.

Functionally, rubredoxin is a small nonheme, iron protein lacking acid-labile sulfide. Its single Fe, chelated to 4 Cys, functions as an electron acceptor and may also stabilize the conformation of the molecule. This Methanocaldococcus jannaschii (strain ATCC 43067 / DSM 2661 / JAL-1 / JCM 10045 / NBRC 100440) (Methanococcus jannaschii) protein is Probable Rubredoxin-1.